The chain runs to 304 residues: Pyridoxal 5'-phosphate synthase subunit PdxS (304 aa).

Residue aspartate 34 coordinates D-ribose 5-phosphate. Lysine 91 serves as the catalytic Schiff-base intermediate with D-ribose 5-phosphate. Glycine 163 contributes to the D-ribose 5-phosphate binding site. Arginine 175 contacts D-glyceraldehyde 3-phosphate. D-ribose 5-phosphate is bound by residues glycine 224 and 245-246 (GS).

Belongs to the PdxS/SNZ family. In the presence of PdxT, forms a dodecamer of heterodimers.

The enzyme catalyses aldehydo-D-ribose 5-phosphate + D-glyceraldehyde 3-phosphate + L-glutamine = pyridoxal 5'-phosphate + L-glutamate + phosphate + 3 H2O + H(+). The protein operates within cofactor biosynthesis; pyridoxal 5'-phosphate biosynthesis. Catalyzes the formation of pyridoxal 5'-phosphate from ribose 5-phosphate (RBP), glyceraldehyde 3-phosphate (G3P) and ammonia. The ammonia is provided by the PdxT subunit. Can also use ribulose 5-phosphate and dihydroxyacetone phosphate as substrates, resulting from enzyme-catalyzed isomerization of RBP and G3P, respectively. The polypeptide is Pyridoxal 5'-phosphate synthase subunit PdxS (Streptomyces avermitilis (strain ATCC 31267 / DSM 46492 / JCM 5070 / NBRC 14893 / NCIMB 12804 / NRRL 8165 / MA-4680)).